The primary structure comprises 277 residues: Ras suppressor protein 1 (277 aa).

Residues 1 to 24 form a disordered region; sequence MSKSLKKLVEESREKNQPEVDMSD. Ser-2 is subject to N-acetylserine. The span at 7–24 shows a compositional bias: basic and acidic residues; the sequence is KLVEESREKNQPEVDMSD. LRR repeat units lie at residues 41–63, 64–85, 87–109, 110–133, 135–156, 158–179, and 181–202; these read HITQ…AELK, NLEV…ISSL, KLKH…GSLP, ALEV…FFYL, TLRA…IGKL, KLQI…IGEL, and QLKE…LGNL. A disordered region spans residues 250–277; that stretch reads MQANPEPPKKNNDKSKKISRKPLAAKNR. Residues 256 to 265 show a composition bias toward basic and acidic residues; sequence PPKKNNDKSK.

In terms of biological role, potentially plays a role in the Ras signal transduction pathway. Capable of suppressing v-Ras transformation in vitro. This chain is Ras suppressor protein 1 (RSU1), found in Homo sapiens (Human).